The sequence spans 407 residues: MNKLNKVILAYSGGLDTSIIIPWLKENYNCEVIAVCGNVGQKDELDGLEEKAIKTGASKLYMEDLTKEFVEDYIFPTIQAGAIYEGKYLLGTSFARPLIGKRLVEIAKVEGADAICHGCTGKGNDQVRFELAVKAFDPDMKIIAPWRIWDIKSREDEITYAEARNVPIKINHETNYSKDKNIWHLSHEGLDLEDPKNEPKYDEILELSNSLEKAPNEPTYITLTFEKGNAVALNGEKMDAVTLLDELNKIGGKNAIGITDMVENRLVGMKSRGVYETPGGTILYKAHKDLEELCLDKETSHYKEQISLKFADLVYNGLWFTPLREALSEFIKKTQETVTGEIKLKLYKGNIVNAGMTSPYSLYSEEYATFGEDAVYNQNDSAGFITLYGLPTVVKAKMYQSLKKEDK.

ATP is bound at residue 10–18 (AYSGGLDTS). L-citrulline contacts are provided by Tyr-88 and Ser-93. Gly-118 lines the ATP pocket. L-aspartate-binding residues include Thr-120, Asn-124, and Asp-125. Asn-124 lines the L-citrulline pocket. Arg-128, Ser-177, Ser-186, Glu-263, and Tyr-275 together coordinate L-citrulline.

This sequence belongs to the argininosuccinate synthase family. Type 1 subfamily. As to quaternary structure, homotetramer.

It is found in the cytoplasm. It catalyses the reaction L-citrulline + L-aspartate + ATP = 2-(N(omega)-L-arginino)succinate + AMP + diphosphate + H(+). It functions in the pathway amino-acid biosynthesis; L-arginine biosynthesis; L-arginine from L-ornithine and carbamoyl phosphate: step 2/3. The chain is Argininosuccinate synthase from Clostridium botulinum (strain Alaska E43 / Type E3).